Consider the following 260-residue polypeptide: Dolichol-phosphate mannosyltransferase subunit 1 (260 aa).

Positions 1 to 25 (MASTGASRSLAASPRPPQGRSSRQD) are disordered. Alanine 2 carries the post-translational modification N-acetylalanine. Serine 3 and serine 9 each carry phosphoserine. The GDP-alpha-D-mannose site is built by proline 32, tyrosine 34, glutamate 36, isoleucine 63, aspartate 65, aspartate 118, alanine 119, aspartate 120, arginine 147, arginine 234, and lysine 240. Mg(2+) is bound at residue aspartate 120. A Mn(2+)-binding site is contributed by aspartate 120.

It belongs to the glycosyltransferase 2 family. In terms of assembly, component of the dolichol-phosphate mannose (DPM) synthase complex composed of DPM1, DPM2 and DPM3; within the complex, directly interacts with DPM3. This interaction may stabilize DPM1. It depends on Mg(2+) as a cofactor. Requires Mn(2+) as cofactor. Ca(2+) serves as cofactor.

The protein localises to the endoplasmic reticulum. It catalyses the reaction a di-trans,poly-cis-dolichyl phosphate + GDP-alpha-D-mannose = a di-trans,poly-cis-dolichyl beta-D-mannosyl phosphate + GDP. The protein operates within protein modification; protein glycosylation. In terms of biological role, transfers mannose from GDP-mannose to dolichol monophosphate to form dolichol phosphate mannose (Dol-P-Man) which is the mannosyl donor in pathways leading to N-glycosylation, glycosyl phosphatidylinositol membrane anchoring, and O-mannosylation of proteins; catalytic subunit of the dolichol-phosphate mannose (DPM) synthase complex. This Mus musculus (Mouse) protein is Dolichol-phosphate mannosyltransferase subunit 1 (Dpm1).